The primary structure comprises 185 residues: Elongation factor P (185 aa).

It belongs to the elongation factor P family.

It is found in the cytoplasm. It functions in the pathway protein biosynthesis; polypeptide chain elongation. Involved in peptide bond synthesis. Stimulates efficient translation and peptide-bond synthesis on native or reconstituted 70S ribosomes in vitro. Probably functions indirectly by altering the affinity of the ribosome for aminoacyl-tRNA, thus increasing their reactivity as acceptors for peptidyl transferase. In Symbiobacterium thermophilum (strain DSM 24528 / JCM 14929 / IAM 14863 / T), this protein is Elongation factor P.